Here is a 359-residue protein sequence, read N- to C-terminus: tRNA-specific 2-thiouridylase MnmA (359 aa).

ATP contacts are provided by residues 6-13 (AMSGGVDS) and L32. C97 acts as the Nucleophile in catalysis. An intrachain disulfide couples C97 to C195. G121 provides a ligand contact to ATP. The segment at 144–146 (KDQ) is interaction with tRNA. Residue C195 is the Cysteine persulfide intermediate of the active site.

The protein belongs to the MnmA/TRMU family.

It is found in the cytoplasm. It carries out the reaction S-sulfanyl-L-cysteinyl-[protein] + uridine(34) in tRNA + AH2 + ATP = 2-thiouridine(34) in tRNA + L-cysteinyl-[protein] + A + AMP + diphosphate + H(+). Functionally, catalyzes the 2-thiolation of uridine at the wobble position (U34) of tRNA, leading to the formation of s(2)U34. The chain is tRNA-specific 2-thiouridylase MnmA from Tropheryma whipplei (strain Twist) (Whipple's bacillus).